Consider the following 320-residue polypeptide: Cyclin-D6-1 (320 aa).

Residues 279-320 (HHRSASSESERTTTVGSAANSADAKRRCMGPPRQWGVGGPDE) are disordered.

This sequence belongs to the cyclin family. Cyclin D subfamily.

The polypeptide is Cyclin-D6-1 (CYCD6-1) (Oryza sativa subsp. japonica (Rice)).